The sequence spans 180 residues: Endoribonuclease YbeY (180 aa).

Zn(2+) contacts are provided by H149, H153, and H159.

It belongs to the endoribonuclease YbeY family. Requires Zn(2+) as cofactor.

It localises to the cytoplasm. Its function is as follows. Single strand-specific metallo-endoribonuclease involved in late-stage 70S ribosome quality control and in maturation of the 3' terminus of the 16S rRNA. This Prochlorococcus marinus subsp. pastoris (strain CCMP1986 / NIES-2087 / MED4) protein is Endoribonuclease YbeY.